Reading from the N-terminus, the 232-residue chain is Probable transglycosylase SceD (232 aa).

A signal peptide spans 1-25 (MKKLLVASSASAALFAVGVGANAHA). The interval 84 to 154 (DSSAQQAPAQ…QQSADSGSNV (71 aa)) is disordered. Positions 87–148 (AQQAPAQSTT…QTQQPAQQSA (62 aa)) are enriched in low complexity.

The protein belongs to the transglycosylase family. SceD subfamily.

Its subcellular location is the secreted. Its function is as follows. Is able to cleave peptidoglycan and affects clumping and separation of bacterial cells. This chain is Probable transglycosylase SceD (sceD), found in Staphylococcus carnosus (strain TM300).